The chain runs to 444 residues: Enolase (444 aa).

Residues histidine 163 and glutamate 172 each coordinate substrate. Residue glutamate 215 is the Proton donor of the active site. Mg(2+)-binding residues include aspartate 250, glutamate 300, and aspartate 327. Residues glutamate 300 and aspartate 327 each contribute to the substrate site. Lysine 352 (proton acceptor) is an active-site residue. Substrate is bound by residues 379-382 (SHRS) and lysine 403.

This sequence belongs to the enolase family. In terms of assembly, homodimer. Mg(2+) is required as a cofactor.

It is found in the cytoplasm. The enzyme catalyses (2R)-2-phosphoglycerate = phosphoenolpyruvate + H2O. It participates in carbohydrate degradation; glycolysis; pyruvate from D-glyceraldehyde 3-phosphate: step 4/5. The protein is Enolase (PGH1) of Solanum lycopersicum (Tomato).